The primary structure comprises 100 residues: MSDKTLTRMDLSEAVFREVGLSRNESAQLVESVLQHVSDALASGETVKISSFGTFTVRDKSARIGRNPKTGDEVPISPRRVLTFRPSHLMKERVAAGGKN.

It belongs to the bacterial histone-like protein family. As to quaternary structure, heterodimer of an alpha and a beta chain.

Functionally, this protein is one of the two subunits of integration host factor, a specific DNA-binding protein that functions in genetic recombination as well as in transcriptional and translational control. This is Integration host factor subunit alpha from Cereibacter sphaeroides (strain ATCC 17023 / DSM 158 / JCM 6121 / CCUG 31486 / LMG 2827 / NBRC 12203 / NCIMB 8253 / ATH 2.4.1.) (Rhodobacter sphaeroides).